Here is a 289-residue protein sequence, read N- to C-terminus: Serine/threonine-protein phosphatase Pgam5, mitochondrial (289 aa).

Residues 7-23 traverse the membrane as a helical segment; it reads FACGTGAGLAAYYLQRL.

The protein belongs to the phosphoglycerate mutase family. BPG-dependent PGAM subfamily. As to quaternary structure, interacts with Pk92B/ASK1.

It localises to the mitochondrion outer membrane. The catalysed reaction is O-phospho-L-seryl-[protein] + H2O = L-seryl-[protein] + phosphate. The enzyme catalyses O-phospho-L-threonyl-[protein] + H2O = L-threonyl-[protein] + phosphate. Functionally, displays phosphatase activity for serine/threonine residues, and dephosphorylates and activates Pk92B kinase. Has apparently no phosphoglycerate mutase activity. This chain is Serine/threonine-protein phosphatase Pgam5, mitochondrial, found in Drosophila sechellia (Fruit fly).